The chain runs to 247 residues: uncharacterized protein (247 aa).

The segment at 161-187 (KEQSDATSDATTSEKNKSPECPKATTE) is disordered. Residues 172–187 (TSEKNKSPECPKATTE) show a composition bias toward basic and acidic residues.

This is an uncharacterized protein from Mus musculus (Mouse).